A 106-amino-acid polypeptide reads, in one-letter code: MITLTDSAIAAIKFALSQTCEPADGLRIKVEAGGCSGFKYHLGLDSESRDGDAVIEAGGVKVYVDSASQPHVSGMTVDFTTGVDSAGFIFDNPNARENCACGKSFG.

The protein belongs to the HesB/IscA family.

This is an uncharacterized protein from Sinorhizobium fredii (strain NBRC 101917 / NGR234).